We begin with the raw amino-acid sequence, 283 residues long: Aspartate dehydrogenase domain-containing protein (283 aa).

Residues serine 20 and serine 168 each carry the phosphoserine modification.

This sequence belongs to the L-aspartate dehydrogenase family.

This chain is Aspartate dehydrogenase domain-containing protein, found in Homo sapiens (Human).